Reading from the N-terminus, the 433-residue chain is E3 ubiquitin-protein ligase RGLG5 (433 aa).

The interval 1–61 is disordered; it reads MGGSSSKESP…SYNSGRQTPK (61 aa). Gly2 carries the N-myristoyl glycine lipid modification. The segment covering 22–39 has biased composition (low complexity); it reads SVSGSSSYSSAWDQSSYY. A compositionally biased stretch (polar residues) spans 40–61; the sequence is QTPNHPSASPVSSYNSGRQTPK. The 221-residue stretch at 93–313 folds into the VWFA domain; sequence NLIVGIDVTK…KEAEFALSAL (221 aa). A disordered region spans residues 340–383; it reads IALPPPTYATQSMRNSPRTSRSTSFQNKPYDNGVSSTPPSTTHN. The span at 347–383 shows a compositional bias: polar residues; that stretch reads YATQSMRNSPRTSRSTSFQNKPYDNGVSSTPPSTTHN. The segment at 390 to 423 adopts an RING-type zinc-finger fold; sequence CPVCLVSAKNMAFNCGHQTCAGCGEDLHVCPICR.

As to quaternary structure, interacts with PP2CA. In terms of processing, N-myristoylated.

Its subcellular location is the cell membrane. The catalysed reaction is S-ubiquitinyl-[E2 ubiquitin-conjugating enzyme]-L-cysteine + [acceptor protein]-L-lysine = [E2 ubiquitin-conjugating enzyme]-L-cysteine + N(6)-ubiquitinyl-[acceptor protein]-L-lysine.. Functionally, together with RGLG1, mediates the ubiquitination and subsequent proteasomal degradation of the target protein PP2CA. Functions as a positive regulator of abscisic acid (ABA) signaling through ABA-dependent degradation of PP2CA, a major inhibitor of ABA signaling. This Arabidopsis thaliana (Mouse-ear cress) protein is E3 ubiquitin-protein ligase RGLG5.